A 361-amino-acid chain; its full sequence is Phospho-N-acetylmuramoyl-pentapeptide-transferase (361 aa).

Helical transmembrane passes span 26–46 (AILG…VMIR), 73–93 (TMGG…WADL), 97–117 (YVWV…VDDY), 134–154 (YFWQ…TASM), 168–188 (VSLT…IVGS), 200–220 (GLAI…AYLS), 237–257 (TGEL…FLWF), 264–284 (VFMG…VAVI), 289–309 (IVLF…ILQV), and 340–360 (IVRF…SLKI).

It belongs to the glycosyltransferase 4 family. MraY subfamily. Requires Mg(2+) as cofactor.

Its subcellular location is the cell inner membrane. The enzyme catalyses UDP-N-acetyl-alpha-D-muramoyl-L-alanyl-gamma-D-glutamyl-meso-2,6-diaminopimeloyl-D-alanyl-D-alanine + di-trans,octa-cis-undecaprenyl phosphate = di-trans,octa-cis-undecaprenyl diphospho-N-acetyl-alpha-D-muramoyl-L-alanyl-D-glutamyl-meso-2,6-diaminopimeloyl-D-alanyl-D-alanine + UMP. Its pathway is cell wall biogenesis; peptidoglycan biosynthesis. Catalyzes the initial step of the lipid cycle reactions in the biosynthesis of the cell wall peptidoglycan: transfers peptidoglycan precursor phospho-MurNAc-pentapeptide from UDP-MurNAc-pentapeptide onto the lipid carrier undecaprenyl phosphate, yielding undecaprenyl-pyrophosphoryl-MurNAc-pentapeptide, known as lipid I. The sequence is that of Phospho-N-acetylmuramoyl-pentapeptide-transferase from Marinobacter nauticus (strain ATCC 700491 / DSM 11845 / VT8) (Marinobacter aquaeolei).